A 358-amino-acid polypeptide reads, in one-letter code: MAPGTLTELAGESKLNSKFVRDEDERPKVAYNVFSDEIPVISLAGIDDVDGKRGEICRQIVEACENWGIFQVVDHGVDTNLVADMTRLARDFFALPPEDKLRFDMSGGKKGGFIVSSHLQGEAVQDWREIVTYFSYPVRNRDYSRWPDKPEGWVKVTEEYSERLMSLACKLLEVLSEAMGLEKESLTNACVDMDQKIVVNYYPKCPQPDLTLGLKRHTDPGTITLLLQDQVGGLQATRDNGKTWITVQPVEGAFVVNLGDHGHFLSNGRFKNADHQAVVNSNSSRLSIATFQNPAPDATVYPLKVREGEKAILEEPITFAEMYKRKMGRDLELARLKKLAKEERDHKEVDKPVDQIFA.

The 105-residue stretch at 190–294 (CVDMDQKIVV…RLSIATFQNP (105 aa)) folds into the Fe2OG dioxygenase domain. The Fe cation site is built by H217, D219, and H275. Residue R285 participates in 2-oxoglutarate binding.

Belongs to the iron/ascorbate-dependent oxidoreductase family. As to quaternary structure, interacts with Dihydroflavonol-4-reductase (TT3), chalcone synthase (TT4) and chalcone isomerase (TT5) to form a flavonoid enzyme complex. Fe(2+) is required as a cofactor. Requires L-ascorbate as cofactor.

The catalysed reaction is a (2S)-flavan-4-one + 2-oxoglutarate + O2 = a (2R,3R)-dihydroflavonol + succinate + CO2. Its pathway is secondary metabolite biosynthesis; flavonoid biosynthesis. Its function is as follows. Catalyzes the 3-beta-hydroxylation of 2S-flavanones to 2R,3R-dihydroflavonols which are intermediates in the biosynthesis of flavonols, anthocyanidins, catechins and proanthocyanidins in plants. The chain is Naringenin,2-oxoglutarate 3-dioxygenase (F3H) from Arabidopsis thaliana (Mouse-ear cress).